Consider the following 113-residue polypeptide: Beta-defensin 112 (113 aa).

3 disulfides stabilise this stretch: Cys54–Cys82, Cys61–Cys75, and Cys65–Cys83.

This sequence belongs to the beta-defensin family.

The protein resides in the secreted. Functionally, has antibacterial activity. The polypeptide is Beta-defensin 112 (DEFB112) (Pan troglodytes (Chimpanzee)).